The sequence spans 666 residues: Protein translocase subunit SecA 2 (666 aa).

ATP-binding positions include Q119, 137 to 141 (GEGKS), and D546.

This sequence belongs to the SecA family. Monomer and homodimer. Part of the essential Sec protein translocation apparatus which comprises SecA, SecYEG and auxiliary proteins SecDF-YajC and YidC.

It is found in the cell inner membrane. The protein resides in the cytoplasm. It catalyses the reaction ATP + H2O + cellular proteinSide 1 = ADP + phosphate + cellular proteinSide 2.. Its function is as follows. Part of the Sec protein translocase complex. Interacts with the SecYEG preprotein conducting channel. Has a central role in coupling the hydrolysis of ATP to the transfer of proteins into and across the cell membrane, serving both as a receptor for the preprotein-SecB complex and as an ATP-driven molecular motor driving the stepwise translocation of polypeptide chains across the membrane. This chain is Protein translocase subunit SecA 2, found in Nitrosospira multiformis (strain ATCC 25196 / NCIMB 11849 / C 71).